The chain runs to 373 residues: tRNA-specific 2-thiouridylase MnmA (373 aa).

ATP contacts are provided by residues 12–19 (GMSGGVDS) and Met38. Residues 98–100 (NPD) form an interaction with target base in tRNA region. Cys103 acts as the Nucleophile in catalysis. A disulfide bridge links Cys103 with Cys200. Residue Gly127 coordinates ATP. The interval 150-152 (KDQ) is interaction with tRNA. Catalysis depends on Cys200, which acts as the Cysteine persulfide intermediate. The tract at residues 312–313 (RY) is interaction with tRNA.

Belongs to the MnmA/TRMU family.

The protein localises to the cytoplasm. It carries out the reaction S-sulfanyl-L-cysteinyl-[protein] + uridine(34) in tRNA + AH2 + ATP = 2-thiouridine(34) in tRNA + L-cysteinyl-[protein] + A + AMP + diphosphate + H(+). Functionally, catalyzes the 2-thiolation of uridine at the wobble position (U34) of tRNA, leading to the formation of s(2)U34. This Streptococcus pneumoniae (strain ATCC 700669 / Spain 23F-1) protein is tRNA-specific 2-thiouridylase MnmA.